The following is a 420-amino-acid chain: Protein TabA (420 aa).

Lys57 bears the N6-(pyridoxal phosphate)lysine mark.

This sequence belongs to the Orn/Lys/Arg decarboxylase class-II family. The cofactor is pyridoxal 5'-phosphate.

Functionally, involved in tabtoxin production and pathogenicity. This is Protein TabA (tabA) from Pseudomonas amygdali pv. tabaci (Pseudomonas syringae pv. tabaci).